Consider the following 92-residue polypeptide: Protein AC152 (92 aa).

Its function is as follows. Acts as a transactivator of AC102 and HE65 genes. Therefore, participates in the global recruitment of G-actin to the host nucleus. The polypeptide is Protein AC152 (AC152) (Autographa californica nuclear polyhedrosis virus (AcMNPV)).